The sequence spans 255 residues: Type III pantothenate kinase (255 aa).

Residue aspartate 6–valine 13 participates in ATP binding. Residues tyrosine 100 and glycine 107 to arginine 110 each bind substrate. Residue aspartate 109 is the Proton acceptor of the active site. Aspartate 129 lines the K(+) pocket. Threonine 132 is a binding site for ATP. Threonine 184 is a substrate binding site.

This sequence belongs to the type III pantothenate kinase family. As to quaternary structure, homodimer. NH4(+) serves as cofactor. Requires K(+) as cofactor.

Its subcellular location is the cytoplasm. It catalyses the reaction (R)-pantothenate + ATP = (R)-4'-phosphopantothenate + ADP + H(+). It participates in cofactor biosynthesis; coenzyme A biosynthesis; CoA from (R)-pantothenate: step 1/5. Its function is as follows. Catalyzes the phosphorylation of pantothenate (Pan), the first step in CoA biosynthesis. The chain is Type III pantothenate kinase from Ruminiclostridium cellulolyticum (strain ATCC 35319 / DSM 5812 / JCM 6584 / H10) (Clostridium cellulolyticum).